The sequence spans 401 residues: Nuclear hormone receptor family member nhr-65 (401 aa).

The nuclear receptor DNA-binding region spans 10–79 (PERCKVCGDT…AGMSSENFQF (70 aa)). NR C4-type zinc fingers lie at residues 13–33 (CKVC…CRAC) and 49–67 (CENH…LQRC). An NR LBD domain is found at 132–398 (KAEKLIEFGS…FSHPEFIQDA (267 aa)).

Belongs to the nuclear hormone receptor family.

Its subcellular location is the nucleus. Functionally, orphan nuclear receptor. In Caenorhabditis elegans, this protein is Nuclear hormone receptor family member nhr-65 (nhr-65).